We begin with the raw amino-acid sequence, 658 residues long: MNNSTDAVNPAKKPQTRREKREAAEAFLKNVSDQSFPNSKKVYVQGEIHDIKVGMREITLSDTLVSGSKDKPVYEKNEPLCVYDTSGFYTDENVEIDVHKGIPRLRETWIDARDDVETFTSTHSEFAQQRLDDEGVDEIRFEHLPKMRIAKKGKNVTQMHYARQGIITPEMEYIAIRENLKREEVKDATLLLQHKGQSFGASIPEQITPEFVRDEVARGRAIIPVNINHPECEPMIIGRNFLIKVNANIGNSAVTSSIEEEVEKLVWSTKWGADTVMDLSTGRNIHETREWIMRNSPVPIGTVPIYQALEKVNGVAEDLTWEIFRDTLIEQAEQGVDYFTIHAGVLLRYVPMTAKRVTGIVSRGGSIMAKWCLAHHKENFLYTHFEDICEILKQYDVSFSLGDGLRPGSVADANDEAQFAELHTLGELTKIAWKHDVQTIIEGPGHVPLHMIKENMEEQLEHCGEAPFYTLGPLTTDIAPGYDHITSGIGAANIGWYGCAMLCYVTPKEHLGLPNKEDVKEGLMTYKIAAHAGDLAKGHPGAQIRDNAMSKARFEFRWYDQFNIGLDPERARTYHDETLPQESGKVAHFCSMCGPKFCSMKISQEVREYAANLDKNAIKIQLLDETITLTSDEAIERAMQEKSAEFKATGSEIYQLAE.

A disordered region spans residues 1–22 (MNNSTDAVNPAKKPQTRREKRE). Substrate-binding positions include Asn248, Met277, Tyr306, His342, 362–364 (SRG), 403–406 (DGLR), and Glu442. Residue His446 participates in Zn(2+) binding. Residue Tyr469 participates in substrate binding. His510 is a binding site for Zn(2+). 3 residues coordinate [4Fe-4S] cluster: Cys590, Cys593, and Cys598.

Belongs to the ThiC family. As to quaternary structure, homodimer. The cofactor is [4Fe-4S] cluster.

It catalyses the reaction 5-amino-1-(5-phospho-beta-D-ribosyl)imidazole + S-adenosyl-L-methionine = 4-amino-2-methyl-5-(phosphooxymethyl)pyrimidine + CO + 5'-deoxyadenosine + formate + L-methionine + 3 H(+). Its pathway is cofactor biosynthesis; thiamine diphosphate biosynthesis. Functionally, catalyzes the synthesis of the hydroxymethylpyrimidine phosphate (HMP-P) moiety of thiamine from aminoimidazole ribotide (AIR) in a radical S-adenosyl-L-methionine (SAM)-dependent reaction. The sequence is that of Phosphomethylpyrimidine synthase from Colwellia psychrerythraea (strain 34H / ATCC BAA-681) (Vibrio psychroerythus).